We begin with the raw amino-acid sequence, 707 residues long: Transcription factor 12 (707 aa).

The disordered stretch occupies residues 25–109; the sequence is AMFSPPVNSG…TPFMNSNLIG (85 aa). Polar residues-rich tracts occupy residues 30–48 and 56–76; these read PVNS…QFSG and GTTS…SRGF. A phosphoserine mark is found at Ser47, Ser67, and Ser79. Residues 81–93 are compositionally biased toward basic and acidic residues; that stretch reads HYSDHLNDSRLGT. Position 98 is a phosphoserine (Ser98). A Glycyl lysine isopeptide (Lys-Gly) (interchain with G-Cter in SUMO2) cross-link involves residue Lys110. 2 positions are modified to phosphoserine: Ser116 and Ser124. The tract at residues 119–140 is leucine-zipper; that stretch reads LYSRDSGLSGCQSSLLRQDLGL. Disordered stretches follow at residues 140–222 and 249–313; these read LGSP…SMFA and FGGI…ASHT. Over residues 144 to 163 the composition is skewed to polar residues; that stretch reads AQLSSSGKPGTPYYSFSATS. Lys181 participates in a covalent cross-link: Glycyl lysine isopeptide (Lys-Gly) (interchain with G-Cter in SUMO2). Residues 256–269 are compositionally biased toward low complexity; the sequence is STSHMSQSSSYGSL. The span at 282–306 shows a compositional bias: polar residues; the sequence is VSPTDINTSLPPMSSFHRGSTSSSP. Thr313 carries the phosphothreonine modification. Ser333 carries the post-translational modification Phosphoserine. 2 disordered regions span residues 349-393 and 521-605; these read PDHT…YENS and HKTP…ERRM. Residues 352 to 363 show a composition bias toward low complexity; the sequence is TSSSFPSNPSTP. Polar residues-rich tracts occupy residues 364–377 and 384–393; these read VGSP…TSQW and APSSPSYENS. 2 stretches are compositionally biased toward basic and acidic residues: residues 543-555 and 561-576; these read IKTE…ENLH and DDMK…DIKV. Lys544 participates in a covalent cross-link: Glycyl lysine isopeptide (Lys-Gly) (interchain with G-Cter in SUMO2). Ser565 carries the phosphoserine modification. Lys575 participates in a covalent cross-link: Glycyl lysine isopeptide (Lys-Gly) (interchain with G-Cter in SUMO2). Residue Thr582 is modified to Phosphothreonine. Phosphoserine is present on residues Ser583 and Ser584. Basic and acidic residues predominate over residues 593 to 605; the sequence is PEQKIEREKERRM. The bHLH domain maps to 602 to 655; it reads ERRMANNARERLRVRDINEAFKELGRMCQLHLKSEKPQTKLLILHQAVAVILSL. Residues Lys634 and Lys678 each participate in a glycyl lysine isopeptide (Lys-Gly) (interchain with G-Cter in SUMO2) cross-link. The segment at 657-680 is class A specific domain; that stretch reads QQVRERNLNPKAACLKRREEEKVS. The segment at 675 to 707 is disordered; that stretch reads EEEKVSAASAEPPTTLPGTHPGLSETTNPMGHL. Residues 686–697 are compositionally biased toward low complexity; it reads PPTTLPGTHPGL. Over residues 698 to 707 the composition is skewed to polar residues; it reads SETTNPMGHL.

Efficient DNA binding requires dimerization with another bHLH protein. Forms homo- or heterooligomers with myogenin, E12 and ITF2 proteins. Interacts with PTF1. Interacts with RUNX1T1. Interacts with NEUROD2. Interacts with BHLHA9. In terms of tissue distribution, isoform gamma is highly expressed in lung, kidney, spleen, and is expressed at reduced levels in heart, muscle, liver, pituitary, brain and the trigeminal ganglion. The expression of isoform alpha predominates over isoform gamma in the pituitary and the brain.

It localises to the nucleus. In terms of biological role, transcriptional regulator. Involved in the initiation of neuronal differentiation. Activates transcription by binding to the E box (5'-CANNTG-3'). May be involved in the functional network that regulates the development of the GnRH axis. This chain is Transcription factor 12 (Tcf12), found in Rattus norvegicus (Rat).